The primary structure comprises 234 residues: Fibrillarin-like rRNA/tRNA 2'-O-methyltransferase (234 aa).

S-adenosyl-L-methionine-binding positions include 91–92 (TT), 110–111 (EF), 137–138 (DA), and 157–160 (DVAQ).

This sequence belongs to the methyltransferase superfamily. Fibrillarin family. As to quaternary structure, interacts with nop5. Component of box C/D small ribonucleoprotein (sRNP) particles that contain rpl7ae, FlpA and nop5, plus a guide RNA.

Its function is as follows. Involved in pre-rRNA and tRNA processing. Utilizes the methyl donor S-adenosyl-L-methionine to catalyze the site-specific 2'-hydroxyl methylation of ribose moieties in rRNA and tRNA. Site specificity is provided by a guide RNA that base pairs with the substrate. Methylation occurs at a characteristic distance from the sequence involved in base pairing with the guide RNA. The polypeptide is Fibrillarin-like rRNA/tRNA 2'-O-methyltransferase (Pyrobaculum calidifontis (strain DSM 21063 / JCM 11548 / VA1)).